The following is a 152-amino-acid chain: Large ribosomal subunit protein uL15 (152 aa).

The interval 1-57 is disordered; it reads MTSTLNTLKSNSGSRKKKLRKGRGIAAGQGASCGFGMRGQKSRSGRPTRPGFEGGQM. Basic residues predominate over residues 14-23; that stretch reads SRKKKLRKGR. The span at 25–37 shows a compositional bias: gly residues; it reads IAAGQGASCGFGM.

It belongs to the universal ribosomal protein uL15 family. Part of the 50S ribosomal subunit.

Its function is as follows. Binds to the 23S rRNA. In Prochlorococcus marinus (strain MIT 9301), this protein is Large ribosomal subunit protein uL15.